A 207-amino-acid chain; its full sequence is Proteasome subunit beta 1 (207 aa).

Positions methionine 1–glycine 9 are cleaved as a propeptide — removed in mature form; by autocatalysis. The Nucleophile role is filled by threonine 10.

This sequence belongs to the peptidase T1B family. As to quaternary structure, the 20S proteasome core is composed of 14 alpha and 14 beta subunits that assemble into four stacked heptameric rings, resulting in a barrel-shaped structure. The two inner rings, each composed of seven catalytic beta subunits, are sandwiched by two outer rings, each composed of seven alpha subunits. The catalytic chamber with the active sites is on the inside of the barrel. Has a gated structure, the ends of the cylinder being occluded by the N-termini of the alpha-subunits. Is capped at one or both ends by the proteasome regulatory ATPase, PAN.

It is found in the cytoplasm. The enzyme catalyses Cleavage of peptide bonds with very broad specificity.. Its activity is regulated as follows. The formation of the proteasomal ATPase PAN-20S proteasome complex, via the docking of the C-termini of PAN into the intersubunit pockets in the alpha-rings, triggers opening of the gate for substrate entry. Interconversion between the open-gate and close-gate conformations leads to a dynamic regulation of the 20S proteasome proteolysis activity. Functionally, component of the proteasome core, a large protease complex with broad specificity involved in protein degradation. The chain is Proteasome subunit beta 1 from Thermococcus sibiricus (strain DSM 12597 / MM 739).